A 284-amino-acid polypeptide reads, in one-letter code: Ribose-5-phosphate isomerase (284 aa).

It belongs to the ribose 5-phosphate isomerase family.

It localises to the cytoplasm. It carries out the reaction aldehydo-D-ribose 5-phosphate = D-ribulose 5-phosphate. It functions in the pathway carbohydrate degradation; pentose phosphate pathway; D-ribose 5-phosphate from D-ribulose 5-phosphate (non-oxidative stage): step 1/1. This Lodderomyces elongisporus (strain ATCC 11503 / CBS 2605 / JCM 1781 / NBRC 1676 / NRRL YB-4239) (Yeast) protein is Ribose-5-phosphate isomerase (RKI1).